The following is a 284-amino-acid chain: L-ribulose-5-phosphate 3-epimerase UlaE (284 aa).

Belongs to the L-ribulose-5-phosphate 3-epimerase family.

The enzyme catalyses L-ribulose 5-phosphate = L-xylulose 5-phosphate. Its pathway is cofactor degradation; L-ascorbate degradation; D-xylulose 5-phosphate from L-ascorbate: step 3/4. Functionally, catalyzes the isomerization of L-xylulose-5-phosphate to L-ribulose-5-phosphate. Is involved in the anaerobic L-ascorbate utilization. This is L-ribulose-5-phosphate 3-epimerase UlaE from Escherichia coli O127:H6 (strain E2348/69 / EPEC).